A 269-amino-acid chain; its full sequence is Putative hydro-lyase M446_2125 (269 aa).

The protein belongs to the D-glutamate cyclase family.

This chain is Putative hydro-lyase M446_2125, found in Methylobacterium sp. (strain 4-46).